A 347-amino-acid chain; its full sequence is NADH-ubiquinone oxidoreductase chain 2 (347 aa).

The next 9 helical transmembrane spans lie at 3–23 (PLAL…TMMS), 59–79 (YFMT…INLM), 93–115 (VASN…HFWV), 150–170 (NTNL…WGGL), 178–198 (ILAY…PFNP), 199–219 (TLTL…FMIL), 242–262 (IMLM…GFMP), 274–294 (NSII…YFYM), and 326–346 (LPTL…ISML).

Belongs to the complex I subunit 2 family. Core subunit of respiratory chain NADH dehydrogenase (Complex I) which is composed of 45 different subunits. Interacts with TMEM242.

It localises to the mitochondrion inner membrane. It carries out the reaction a ubiquinone + NADH + 5 H(+)(in) = a ubiquinol + NAD(+) + 4 H(+)(out). Functionally, core subunit of the mitochondrial membrane respiratory chain NADH dehydrogenase (Complex I) which catalyzes electron transfer from NADH through the respiratory chain, using ubiquinone as an electron acceptor. Essential for the catalytic activity and assembly of complex I. In Loxodonta africana (African elephant), this protein is NADH-ubiquinone oxidoreductase chain 2.